The sequence spans 229 residues: 7-cyano-7-deazaguanine synthase (229 aa).

7–17 provides a ligand contact to ATP; sequence LSGGLDSSTIL. Zn(2+) contacts are provided by Cys-191, Cys-199, Cys-202, and Cys-205.

The protein belongs to the QueC family. Zn(2+) serves as cofactor.

The enzyme catalyses 7-carboxy-7-deazaguanine + NH4(+) + ATP = 7-cyano-7-deazaguanine + ADP + phosphate + H2O + H(+). It functions in the pathway purine metabolism; 7-cyano-7-deazaguanine biosynthesis. Its function is as follows. Catalyzes the ATP-dependent conversion of 7-carboxy-7-deazaguanine (CDG) to 7-cyano-7-deazaguanine (preQ(0)). The sequence is that of 7-cyano-7-deazaguanine synthase from Nostoc sp. (strain PCC 7120 / SAG 25.82 / UTEX 2576).